Consider the following 199-residue polypeptide: ATP-dependent Clp protease proteolytic subunit (199 aa).

Catalysis depends on serine 98, which acts as the Nucleophile. The active site involves histidine 123.

This sequence belongs to the peptidase S14 family. In terms of assembly, fourteen ClpP subunits assemble into 2 heptameric rings which stack back to back to give a disk-like structure with a central cavity, resembling the structure of eukaryotic proteasomes.

The protein localises to the cytoplasm. It carries out the reaction Hydrolysis of proteins to small peptides in the presence of ATP and magnesium. alpha-casein is the usual test substrate. In the absence of ATP, only oligopeptides shorter than five residues are hydrolyzed (such as succinyl-Leu-Tyr-|-NHMec, and Leu-Tyr-Leu-|-Tyr-Trp, in which cleavage of the -Tyr-|-Leu- and -Tyr-|-Trp bonds also occurs).. In terms of biological role, cleaves peptides in various proteins in a process that requires ATP hydrolysis. Has a chymotrypsin-like activity. Plays a major role in the degradation of misfolded proteins. This is ATP-dependent Clp protease proteolytic subunit from Clostridium botulinum (strain Eklund 17B / Type B).